The chain runs to 92 residues: MADVTYRLVICGLVQGVFYRGSMVSRANALGLRGWVRNRLDGSVEAVVQGEATEVNRMVEWARRGPSNAVVTSVNIFPSEGDFVGFQLREST.

An Acylphosphatase-like domain is found at 5 to 90 (TYRLVICGLV…GDFVGFQLRE (86 aa)). Catalysis depends on residues arginine 20 and asparagine 38.

This sequence belongs to the acylphosphatase family.

The enzyme catalyses an acyl phosphate + H2O = a carboxylate + phosphate + H(+). This Albidiferax ferrireducens (strain ATCC BAA-621 / DSM 15236 / T118) (Rhodoferax ferrireducens) protein is Acylphosphatase (acyP).